The sequence spans 245 residues: tRNA (guanine-N(1)-)-methyltransferase (245 aa).

S-adenosyl-L-methionine is bound by residues Gly112 and 132-137 (IGDFVL).

The protein belongs to the RNA methyltransferase TrmD family. In terms of assembly, homodimer.

It localises to the cytoplasm. The catalysed reaction is guanosine(37) in tRNA + S-adenosyl-L-methionine = N(1)-methylguanosine(37) in tRNA + S-adenosyl-L-homocysteine + H(+). Specifically methylates guanosine-37 in various tRNAs. The polypeptide is tRNA (guanine-N(1)-)-methyltransferase (Geobacter sulfurreducens (strain ATCC 51573 / DSM 12127 / PCA)).